Reading from the N-terminus, the 682-residue chain is MGLITLILALIVVLFVCVFASNSSKPANNASFADNGAQRTAREFGPAARGGELLEFERWFKDTLATVFAQKAEKVANPTRAWNAETVFDNLSPWTSAADFGTVCHTLIGYCVRYNSPGDALHHSPDLANNLISGLRAICARLPDPPPHQQAPWGPVADWYHFTITMPEVFMTVTIVLDNTPHYDEAAALTRHWLALYLPTAVTSMGWHRTAGNAMRMGVPYAYGQLLRGYSAQQIAQEPGVQETLKTVAFPYVAAGNGLHPDSIYIDHLDVRAYGYLINSFFTFAYYTRLFGADVVNTEGLTRAIENVGSPEGVVVPGVMSRNGTLYSNVIGNFVDYPIAVHSADLSKVLTKLSDSYYGAVVGATTRLAYYEADPTNNTQAPLWTMTRRIWNRRARVINYNANTVMFESGIILQSLNGVLRVPSTTTSTQSFRPAVGKTALAKTRTAGAILVHARFAEMNNLQFKSCTLFYDHGMFQLYYNIGVEPNSLNNVNGRVVVLSRDTSVNTNDLSFEAQRLNNNNSSDGSAFNGVVCQRVPITNFNVPSLTVRSPSASVELVEQIISFQNMYTASAVACYKLNVEGHSDALRAYRINMDEVVYVTTGEGVKALFAYPWLMLKEDAAVVFMSANEDLVVPMSVINNAFSAIDEPGLQYAPVNCFLYGNGFRLNDSLANLQFQFEIIN.

This sequence belongs to the baculoviridae E66 family.

It is found in the virion membrane. Its function is as follows. Component of the polyhedra envelope. This is Occlusion-derived virus envelope protein E66 from Orgyia pseudotsugata (Douglas-fir tussock moth).